Consider the following 88-residue polypeptide: MALLDFFLSRKKSTANIAKERLQIIVAERRRSDAEPHYLPQLRKDILEVICKYVQIDPEMVTVQLEQKDGDISILELNVTLPEAEESR.

This sequence belongs to the MinE family.

In terms of biological role, prevents the cell division inhibition by proteins MinC and MinD at internal division sites while permitting inhibition at polar sites. This ensures cell division at the proper site by restricting the formation of a division septum at the midpoint of the long axis of the cell. This is Cell division topological specificity factor from Citrobacter koseri (strain ATCC BAA-895 / CDC 4225-83 / SGSC4696).